The following is a 392-amino-acid chain: Small ribosomal subunit protein uS9m (392 aa).

A compositionally biased stretch (low complexity) spans 8-25 (RSSRAMSSASPASASDSD). Positions 8-27 (RSSRAMSSASPASASDSDTS) are disordered.

This sequence belongs to the universal ribosomal protein uS9 family. As to quaternary structure, component of the mitochondrial ribosome small subunit (28S) which comprises a 12S rRNA and about 30 distinct proteins.

Its subcellular location is the mitochondrion. The chain is Small ribosomal subunit protein uS9m (mrps-9) from Caenorhabditis elegans.